A 124-amino-acid polypeptide reads, in one-letter code: S-adenosylmethionine decarboxylase proenzyme (124 aa).

Serine 70 (schiff-base intermediate with substrate; via pyruvic acid) is an active-site residue. Serine 70 is modified (pyruvic acid (Ser); by autocatalysis). Histidine 75 (proton acceptor; for processing activity) is an active-site residue. Residue cysteine 90 is the Proton donor; for catalytic activity of the active site.

This sequence belongs to the prokaryotic AdoMetDC family. Type 1 subfamily. Heterotetramer of two alpha and two beta chains arranged as a dimer of alpha/beta heterodimers. Pyruvate is required as a cofactor. In terms of processing, is synthesized initially as an inactive proenzyme. Formation of the active enzyme involves a self-maturation process in which the active site pyruvoyl group is generated from an internal serine residue via an autocatalytic post-translational modification. Two non-identical subunits are generated from the proenzyme in this reaction, and the pyruvate is formed at the N-terminus of the alpha chain, which is derived from the carboxyl end of the proenzyme. The post-translation cleavage follows an unusual pathway, termed non-hydrolytic serinolysis, in which the side chain hydroxyl group of the serine supplies its oxygen atom to form the C-terminus of the beta chain, while the remainder of the serine residue undergoes an oxidative deamination to produce ammonia and the pyruvoyl group blocking the N-terminus of the alpha chain.

The enzyme catalyses S-adenosyl-L-methionine + H(+) = S-adenosyl 3-(methylsulfanyl)propylamine + CO2. Its pathway is amine and polyamine biosynthesis; S-adenosylmethioninamine biosynthesis; S-adenosylmethioninamine from S-adenosyl-L-methionine: step 1/1. In terms of biological role, catalyzes the decarboxylation of S-adenosylmethionine to S-adenosylmethioninamine (dcAdoMet), the propylamine donor required for the synthesis of the polyamines spermine and spermidine from the diamine putrescine. This is S-adenosylmethionine decarboxylase proenzyme from Pyrobaculum neutrophilum (strain DSM 2338 / JCM 9278 / NBRC 100436 / V24Sta) (Thermoproteus neutrophilus).